A 95-amino-acid chain; its full sequence is Progonadoliberin-1 (95 aa).

Positions 1–22 (MAPQTFALWLLLVGTLLGQGCC) are cleaved as a signal peptide. At glutamine 23 the chain carries Pyrrolidone carboxylic acid. A Glycine amide modification is found at glycine 32.

This sequence belongs to the GnRH family.

The protein resides in the secreted. In terms of biological role, stimulates the secretion of gonadotropins. This chain is Progonadoliberin-1 (gnrh1), found in Morone saxatilis (Striped bass).